The following is a 322-amino-acid chain: Quinolinate synthase (322 aa).

Residues His-38 and Ser-55 each contribute to the iminosuccinate site. A [4Fe-4S] cluster-binding site is contributed by Cys-100. Iminosuccinate contacts are provided by residues 126 to 128 and Ser-143; that span reads YIN. Cys-186 serves as a coordination point for [4Fe-4S] cluster. Iminosuccinate contacts are provided by residues 212–214 and Thr-229; that span reads HPE. Residue Cys-279 coordinates [4Fe-4S] cluster.

It belongs to the quinolinate synthase family. Type 2 subfamily. [4Fe-4S] cluster serves as cofactor.

The protein resides in the cytoplasm. It catalyses the reaction iminosuccinate + dihydroxyacetone phosphate = quinolinate + phosphate + 2 H2O + H(+). The protein operates within cofactor biosynthesis; NAD(+) biosynthesis; quinolinate from iminoaspartate: step 1/1. Catalyzes the condensation of iminoaspartate with dihydroxyacetone phosphate to form quinolinate. The protein is Quinolinate synthase of Cyanothece sp. (strain PCC 7425 / ATCC 29141).